Reading from the N-terminus, the 644-residue chain is uncharacterized protein (644 aa).

The interval 1 to 35 (MKANGLDNDPARTGMERTDIDSEHPEAQPLLNNNH) is disordered. At 1–90 (MKANGLDNDP…ILNILILINT (90 aa)) the chain is on the cytoplasmic side. Residues 14 to 26 (GMERTDIDSEHPE) show a composition bias toward basic and acidic residues. Phosphoserine is present on residues S22, S56, and S63. Residues 91-111 (IWLVTTLISDFFFNINILFGF) traverse the membrane as a helical segment. The Vacuolar portion of the chain corresponds to 112–122 (SNRYASFNDLT). The helical transmembrane segment at 123–143 (LIFISIIANSFNLWFNKLGLY) threads the bilayer. Residues 144–147 (SALD) lie on the Cytoplasmic side of the membrane. Residues 148–168 (YSLNVTLCVLTLFNLALTYLI) form a helical membrane-spanning segment. Topologically, residues 169–174 (KYTRQR) are vacuolar. Residues 175–195 (IGFVGTFTYLWTSFSFFIGAI) form a helical membrane-spanning segment. The Cytoplasmic portion of the chain corresponds to 196-271 (LDWYLLFYNN…EWVSIGFRNT (76 aa)). Residues 225–251 (NENHTNSTENRDRSQYGSGSPTPTHRS) are disordered. A compositionally biased stretch (polar residues) spans 239 to 251 (QYGSGSPTPTHRS). Phosphoserine is present on S244. A helical transmembrane segment spans residues 272 to 292 (IKFLILIFFALFTLNTLLTTL). The Vacuolar segment spans residues 293–644 (DTYRLTHKLP…IGELGKLTED (352 aa)). The region spanning 348–619 (PIILFEHGGY…IVEGGHEIYK (272 aa)) is the AB hydrolase-1 domain. The disordered stretch occupies residues 469–492 (GRGDGDDGDDGNGNDGDGRNHDKT).

It localises to the vacuole membrane. This is an uncharacterized protein from Saccharomyces cerevisiae (strain ATCC 204508 / S288c) (Baker's yeast).